Here is a 500-residue protein sequence, read N- to C-terminus: Vitamin D(3) 25-hydroxylase (500 aa).

Cys446 lines the heme pocket.

Belongs to the cytochrome P450 family. The cofactor is heme. As to expression, found in liver and kidney.

It localises to the endoplasmic reticulum membrane. The protein resides in the microsome membrane. It catalyses the reaction calciol + reduced [NADPH--hemoprotein reductase] + O2 = calcidiol + oxidized [NADPH--hemoprotein reductase] + H2O + H(+). The enzyme catalyses alfacalcidol + reduced [NADPH--hemoprotein reductase] + O2 = calcitriol + oxidized [NADPH--hemoprotein reductase] + H2O + H(+). The catalysed reaction is dodecanoate + reduced [NADPH--hemoprotein reductase] + O2 = 12-hydroxydodecanoate + oxidized [NADPH--hemoprotein reductase] + H2O + H(+). It carries out the reaction dodecanoate + reduced [NADPH--hemoprotein reductase] + O2 = 11-hydroxydodecanoate + oxidized [NADPH--hemoprotein reductase] + H2O + H(+). It catalyses the reaction 5beta-cholestane-3alpha,7alpha-diol + reduced [NADPH--hemoprotein reductase] + O2 = 5beta-cholestane-3alpha,7alpha,25-triol + oxidized [NADPH--hemoprotein reductase] + H2O + H(+). The enzyme catalyses 5beta-cholestane-3alpha,7alpha,12alpha-triol + reduced [NADPH--hemoprotein reductase] + O2 = 5beta-cholestane-3alpha,7alpha,12alpha,25-tetrol + oxidized [NADPH--hemoprotein reductase] + H2O + H(+). Functionally, catalyzes the 25-hydroxylation of vitamin D(3) (calciol), 1alpha-hydroxyvitamin D(3) (alphacalcidiol) and some C27 steroids. In addition the enzyme catalyzes the hydroxylation of positions 11 and 12 of dodecanoate. The chain is Vitamin D(3) 25-hydroxylase (CYP2D25) from Sus scrofa (Pig).